Reading from the N-terminus, the 483-residue chain is Altronate oxidoreductase (483 aa).

An NAD(+)-binding site is contributed by 18–29 (IIQFGEGNFLRA).

Belongs to the mannitol dehydrogenase family. UxaB subfamily.

The enzyme catalyses D-altronate + NAD(+) = keto-D-tagaturonate + NADH + H(+). Its pathway is carbohydrate metabolism; pentose and glucuronate interconversion. In Escherichia coli O6:K15:H31 (strain 536 / UPEC), this protein is Altronate oxidoreductase.